A 312-amino-acid chain; its full sequence is Ribosomal protein L11 methyltransferase (312 aa).

Positions 163, 184, 206, and 248 each coordinate S-adenosyl-L-methionine.

It belongs to the methyltransferase superfamily. PrmA family.

It localises to the cytoplasm. The catalysed reaction is L-lysyl-[protein] + 3 S-adenosyl-L-methionine = N(6),N(6),N(6)-trimethyl-L-lysyl-[protein] + 3 S-adenosyl-L-homocysteine + 3 H(+). Its function is as follows. Methylates ribosomal protein L11. This Clostridium kluyveri (strain NBRC 12016) protein is Ribosomal protein L11 methyltransferase.